Consider the following 401-residue polypeptide: Argininosuccinate synthase (401 aa).

8 to 16 (AYSGGLDTS) is an ATP binding site. Tyrosine 85 contributes to the L-citrulline binding site. Glycine 115 is an ATP binding site. The L-aspartate site is built by threonine 117, asparagine 121, and aspartate 122. Position 121 (asparagine 121) interacts with L-citrulline. Arginine 125, serine 173, glutamate 258, and tyrosine 270 together coordinate L-citrulline.

This sequence belongs to the argininosuccinate synthase family. Type 1 subfamily. In terms of assembly, homotetramer.

Its subcellular location is the cytoplasm. It carries out the reaction L-citrulline + L-aspartate + ATP = 2-(N(omega)-L-arginino)succinate + AMP + diphosphate + H(+). Its pathway is amino-acid biosynthesis; L-arginine biosynthesis; L-arginine from L-ornithine and carbamoyl phosphate: step 2/3. This Staphylococcus aureus (strain bovine RF122 / ET3-1) protein is Argininosuccinate synthase.